We begin with the raw amino-acid sequence, 390 residues long: Transforming growth factor beta-1 proprotein (390 aa).

The N-terminal stretch at 1–29 (MPPSGLRLLPLLLPLLRLLVLTPGRPAAG) is a signal peptide. The tract at residues 30–74 (LSTCKTIDMELVKRKRIEAIRGQILSKLRLSSPPSQGEVPPVPLP) is straightjacket domain. Residues 75-271 (EAVLALYNST…ATPLERAQHL (197 aa)) are arm domain. N-linked (GlcNAc...) asparagine glycans are attached at residues N82, N136, and N176. The segment at 226–252 (DSKDNTLQVDINGFSSSRRGDLATIHG) is bowtie tail. A Cell attachment site motif is present at residues 244–246 (RGD). Intrachain disulfides connect C285/C294, C293/C356, C322/C387, and C326/C389.

This sequence belongs to the TGF-beta family. As to quaternary structure, homodimer; disulfide-linked. Interacts with the serine proteases, HTRA1 and HTRA3: the interaction with either inhibits TGFB1-mediated signaling and the HTRA protease activity is required for this inhibition. May interact with THSD4; this interaction may lead to sequestration by FBN1 microfibril assembly and attenuation of TGFB signaling. Interacts with CD109, DPT and ASPN. Interacts with EFEMP2. Interacts with TSKU; the interaction contributes to regulation of the hair cycle. Interacts with TGFBR3. In terms of assembly, homodimer; disulfide-linked. Interacts with transforming growth factor beta-1 (TGF-beta-1) chain; interaction is non-covalent and maintains TGF-beta-1 in a latent state; each latency-associated peptide (LAP) monomer interacts with TGF-beta-1 in the other monomer. Interacts with LTBP1; leading to regulation of TGF-beta-1 activation. Interacts with LRRC32/GARP; leading to regulation of TGF-beta-1 activation on the surface of activated regulatory T-cells (Tregs). Interacts with LRRC33/NRROS; leading to regulation of TGF-beta-1 activation in macrophages and microglia. Interacts (via cell attachment site) with integrins ITGAV and ITGB6 (ITGAV:ITGB6), leading to release of the active TGF-beta-1. Interacts with NREP; the interaction results in a decrease in TGFB1 autoinduction. Interacts with HSP90AB1; inhibits latent TGFB1 activation. Homodimer; disulfide-linked. Interacts with TGF-beta receptors (TGFBR1 and TGFBR2), leading to signal transduction. Transforming growth factor beta-1 proprotein: The precursor proprotein is cleaved in the Golgi apparatus by FURIN to form Transforming growth factor beta-1 (TGF-beta-1) and Latency-associated peptide (LAP) chains, which remain non-covalently linked, rendering TGF-beta-1 inactive. Post-translationally, N-glycosylated. Deglycosylation leads to activation of Transforming growth factor beta-1 (TGF-beta-1); mechanisms triggering deglycosylation-driven activation of TGF-beta-1 are however unclear.

It is found in the secreted. The protein localises to the extracellular space. Its subcellular location is the extracellular matrix. In terms of biological role, transforming growth factor beta-1 proprotein: Precursor of the Latency-associated peptide (LAP) and Transforming growth factor beta-1 (TGF-beta-1) chains, which constitute the regulatory and active subunit of TGF-beta-1, respectively. Required to maintain the Transforming growth factor beta-1 (TGF-beta-1) chain in a latent state during storage in extracellular matrix. Associates non-covalently with TGF-beta-1 and regulates its activation via interaction with 'milieu molecules', such as LTBP1, LRRC32/GARP and LRRC33/NRROS, that control activation of TGF-beta-1. Interaction with LRRC33/NRROS regulates activation of TGF-beta-1 in macrophages and microglia. Interaction with LRRC32/GARP controls activation of TGF-beta-1 on the surface of activated regulatory T-cells (Tregs). Interaction with integrins (ITGAV:ITGB6 or ITGAV:ITGB8) results in distortion of the Latency-associated peptide chain and subsequent release of the active TGF-beta-1. Functionally, multifunctional protein that regulates the growth and differentiation of various cell types and is involved in various processes, such as normal development, immune function, microglia function and responses to neurodegeneration. Activation into mature form follows different steps: following cleavage of the proprotein in the Golgi apparatus, Latency-associated peptide (LAP) and Transforming growth factor beta-1 (TGF-beta-1) chains remain non-covalently linked rendering TGF-beta-1 inactive during storage in extracellular matrix. At the same time, LAP chain interacts with 'milieu molecules', such as LTBP1, LRRC32/GARP and LRRC33/NRROS that control activation of TGF-beta-1 and maintain it in a latent state during storage in extracellular milieus. TGF-beta-1 is released from LAP by integrins (ITGAV:ITGB6 or ITGAV:ITGB8): integrin-binding to LAP stabilizes an alternative conformation of the LAP bowtie tail and results in distortion of the LAP chain and subsequent release of the active TGF-beta-1. Once activated following release of LAP, TGF-beta-1 acts by binding to TGF-beta receptors (TGFBR1 and TGFBR2), which transduce signal. While expressed by many cells types, TGF-beta-1 only has a very localized range of action within cell environment thanks to fine regulation of its activation by Latency-associated peptide chain (LAP) and 'milieu molecules'. Plays an important role in bone remodeling: acts as a potent stimulator of osteoblastic bone formation, causing chemotaxis, proliferation and differentiation in committed osteoblasts. Can promote either T-helper 17 cells (Th17) or regulatory T-cells (Treg) lineage differentiation in a concentration-dependent manner. At high concentrations, leads to FOXP3-mediated suppression of RORC and down-regulation of IL-17 expression, favoring Treg cell development. At low concentrations in concert with IL-6 and IL-21, leads to expression of the IL-17 and IL-23 receptors, favoring differentiation to Th17 cells. Stimulates sustained production of collagen through the activation of CREB3L1 by regulated intramembrane proteolysis (RIP). Mediates SMAD2/3 activation by inducing its phosphorylation and subsequent translocation to the nucleus. Positively regulates odontoblastic differentiation in dental papilla cells, via promotion of IPO7-mediated translocation of phosphorylated SMAD2 to the nucleus and subsequent transcription of target genes. Can induce epithelial-to-mesenchymal transition (EMT) and cell migration in various cell types. This Canis lupus familiaris (Dog) protein is Transforming growth factor beta-1 proprotein (TGFB1).